A 412-amino-acid polypeptide reads, in one-letter code: Phospholipase A1-IIdelta (412 aa).

An N-acetylalanine modification is found at Ala2. Catalysis depends on Ser238, which acts as the Acyl-ester intermediate. Catalysis depends on charge relay system residues Ser238, Asp297, and His336.

This sequence belongs to the AB hydrolase superfamily. Lipase family. Expressed in leaves, stems, flowers and siliques, and, at low levels, in seeds and roots (at protein level).

The protein localises to the cytoplasm. Acylhydrolase that catalyzes the hydrolysis of phosphatidylcholine (PC) at the sn-1 position. High activity toward PC, medium activity toward monogalactosyldiacylglycerol (MGDG) and low activity toward triacylglycerol (TAG). Confers sensitivity to UV-B radiation probably by deesterifying membrane phospholipids. This is Phospholipase A1-IIdelta from Arabidopsis thaliana (Mouse-ear cress).